The primary structure comprises 551 residues: Formate--tetrahydrofolate ligase (551 aa).

Residue 65–72 (TPAGEGKT) coordinates ATP.

This sequence belongs to the formate--tetrahydrofolate ligase family.

It carries out the reaction (6S)-5,6,7,8-tetrahydrofolate + formate + ATP = (6R)-10-formyltetrahydrofolate + ADP + phosphate. It participates in one-carbon metabolism; tetrahydrofolate interconversion. The protein is Formate--tetrahydrofolate ligase of Thermosipho melanesiensis (strain DSM 12029 / CIP 104789 / BI429).